Consider the following 146-residue polypeptide: Angiogenin (146 aa).

A signal peptide spans Met1 to Ala24. At Gln25 the chain carries Pyrrolidone carboxylic acid. The Proton acceptor role is filled by His37. 3 cysteine pairs are disulfide-bonded: Cys50/Cys105, Cys63/Cys116, and Cys81/Cys131. The Nucleolar localization signal motif lies at Arg55–Met59. TRNA is bound at residue Cys105. The active-site Proton donor is the His138.

This sequence belongs to the pancreatic ribonuclease family. As to quaternary structure, homodimer. Interacts with RNH1; inhibiting ANG ribonuclease activity. Interacts with PCNA.

The protein resides in the secreted. The protein localises to the nucleus. It is found in the nucleolus. It localises to the cytoplasm. Its subcellular location is the stress granule. With respect to regulation, has weak tRNA ribonuclease activity by itself due to partial autoinhibition by its C-terminus, which folds into a short alpha-helix that partially occludes the substrate-binding site. In absence of stress, the ribonuclease activity is inhibited by RNH1 in the cytoplasm. In response to stress, dissociates from RNH1 in the cytoplasm and associates with cytoplasmic ribosomes with vacant A-sites: ribosomes directly activate the tRNA ribonuclease activity of ANG by refolding the C-terminal alpha-helix. In response to stress, the angiogenic activity of ANG is inhibited by RNH1 in the nucleus. Its function is as follows. Secreted ribonuclease that can either promote or restrict cell proliferation of target cells, depending on the context. Endocytosed in target cells via its receptor PLXNB2 and translocates to the cytoplasm or nucleus. Under stress conditions, localizes to the cytoplasm and promotes the assembly of stress granules (SGs): specifically cleaves a subset of tRNAs within anticodon loops to produce tRNA-derived stress-induced fragments (tiRNAs), resulting in translation repression and inhibition of cell proliferation. tiRNas also prevent formation of apoptosome, thereby promoting cell survival. Preferentially cleaves RNAs between a pyrimidine and an adenosine residue, suggesting that it cleaves the anticodon loop of tRNA(Ala) (32-UUAGCAU-38) after positions 33 and 36. Cleaves a subset of tRNAs, including tRNA(Ala), tRNA(Glu), tRNA(Gly), tRNA(Lys), tRNA(Val), tRNA(His), tRNA(Asp) and tRNA(Sec). Under growth conditions and in differentiated cells, translocates to the nucleus and stimulates ribosomal RNA (rRNA) transcription, including that containing the initiation site sequences of 45S rRNA, thereby promoting cell growth and proliferation. Angiogenin induces vascularization of normal and malignant tissues via its ability to promote rRNA transcription. Involved in hematopoietic stem and progenitor cell (HSPC) growth and survival by promoting rRNA transcription in growth conditions and inhibiting translation in response to stress, respectively. Mediates the crosstalk between myeloid and intestinal epithelial cells to protect the intestinal epithelial barrier integrity: secreted by myeloid cells and promotes intestinal epithelial cells proliferation and survival. Also mediates osteoclast-endothelial cell crosstalk in growing bone: produced by osteoclasts and protects the neighboring vascular cells against senescence by promoting rRNA transcription. This Aotus trivirgatus (Three-striped night monkey) protein is Angiogenin (ANG).